Consider the following 449-residue polypeptide: MSHITFDYSKVLESFAGQHEIDFLQGQVTEADKLLREGTGPGSDFLGWLDLPENYDKDEFARILTAAEKIKADSEVLVVIGIGGSYLGAKAAIDFLNHHFANLQTAKERKAPQILYAGNSISSTYLADLVEYVQDKEFSVNVISKSGTTTEPAIAFRVFKELLVKKYGQEEANKRIYATTDKVKGAVKVEADANNWETFVVPDNVGGRFSVLTAVGLLPIAASGADITALMEGANAARKDLSSDKISENIAYQYAAVRNVLYRKGYITEILANYEPSLQYFGEWWKQLAGESEGKDQKGIYPTSANFSTDLHSLGQFIQEGYRNLFETVIRVDNPRKNVIIPELAEDLDGLGYLQGKDVDFVNKKATDGVLLAHTDGGVPNMFVTLPAQDEFTLGYTIYFFELAIAVSGYMNAVNPFDQPGVEAYKRNMFALLGKPGFEALSAELNARL.

Glu-291 serves as the catalytic Proton donor. Residues His-312 and Lys-426 contribute to the active site.

The protein belongs to the GPI family.

It is found in the cytoplasm. It catalyses the reaction alpha-D-glucose 6-phosphate = beta-D-fructose 6-phosphate. It functions in the pathway carbohydrate biosynthesis; gluconeogenesis. It participates in carbohydrate degradation; glycolysis; D-glyceraldehyde 3-phosphate and glycerone phosphate from D-glucose: step 2/4. Functionally, catalyzes the reversible isomerization of glucose-6-phosphate to fructose-6-phosphate. The sequence is that of Glucose-6-phosphate isomerase from Streptococcus pyogenes serotype M1.